A 201-amino-acid polypeptide reads, in one-letter code: Protamine-like protein 99C (201 aa).

The interval 93 to 143 is disordered; that stretch reads GGQQSSCQRQSPSARLRESERRSSRSKTLCRSAKNRQRGKPKPQQSKRRLS. Residues 94 to 104 are compositionally biased toward polar residues; it reads GQQSSCQRQSP. A compositionally biased stretch (basic residues) spans 125–143; that stretch reads AKNRQRGKPKPQQSKRRLS.

The protein belongs to the UPF0771 family.

The protein localises to the nucleus. It is found in the chromosome. Regulates chromatin compaction in spermatid nuclei and is essential for male fertility. Functions in parallel with other chromatin-condensing proteins such as ProtA, ProtB and Mst77F. This chain is Protamine-like protein 99C, found in Drosophila melanogaster (Fruit fly).